Here is a 289-residue protein sequence, read N- to C-terminus: MDDKSMARGRKAFFTGFPIRHSRSPLIHGFWLKEQGIDGSYEAVEVKPEDFSSFAASLAANGFAGGNVTIPHKEAAYAAAESLDEAARAIGAVNTLWLENGRLCGGNTDAYGFAANLDASAPGWDKADRALVLGAGGASRAVVHALLSRGVCHVSVVNRTLSRAEELAAHFGARVYAHGWDEAQALVSNAGLIVNTTALGMSGHGEGQDFPIDLTCAPKEAVATDIVYVPLRTAFLNKAEKAGLKTVDGLGMLLHQAVPGFERWFGQRPQVTQALREHILADMAKAGAL.

Residues 22-24 and Thr-69 contribute to the shikimate site; that span reads SRS. The Proton acceptor role is filled by Lys-73. Glu-85 provides a ligand contact to NADP(+). Shikimate-binding residues include Asn-94 and Asp-109. NADP(+) is bound by residues 134-138, 158-163, and Ile-226; these read GAGGA and NRTLSR. Tyr-228 provides a ligand contact to shikimate. Gly-249 serves as a coordination point for NADP(+).

Belongs to the shikimate dehydrogenase family. As to quaternary structure, homodimer.

The enzyme catalyses shikimate + NADP(+) = 3-dehydroshikimate + NADPH + H(+). The protein operates within metabolic intermediate biosynthesis; chorismate biosynthesis; chorismate from D-erythrose 4-phosphate and phosphoenolpyruvate: step 4/7. In terms of biological role, involved in the biosynthesis of the chorismate, which leads to the biosynthesis of aromatic amino acids. Catalyzes the reversible NADPH linked reduction of 3-dehydroshikimate (DHSA) to yield shikimate (SA). The protein is Shikimate dehydrogenase (NADP(+)) of Brucella ovis (strain ATCC 25840 / 63/290 / NCTC 10512).